The sequence spans 511 residues: Bifunctional purine biosynthesis protein PurH (511 aa).

The MGS-like domain occupies 1–147; that stretch reads MIQIKRALIS…KNYKHTLVLT (147 aa).

Belongs to the PurH family.

It carries out the reaction (6R)-10-formyltetrahydrofolate + 5-amino-1-(5-phospho-beta-D-ribosyl)imidazole-4-carboxamide = 5-formamido-1-(5-phospho-D-ribosyl)imidazole-4-carboxamide + (6S)-5,6,7,8-tetrahydrofolate. It catalyses the reaction IMP + H2O = 5-formamido-1-(5-phospho-D-ribosyl)imidazole-4-carboxamide. It functions in the pathway purine metabolism; IMP biosynthesis via de novo pathway; 5-formamido-1-(5-phospho-D-ribosyl)imidazole-4-carboxamide from 5-amino-1-(5-phospho-D-ribosyl)imidazole-4-carboxamide (10-formyl THF route): step 1/1. It participates in purine metabolism; IMP biosynthesis via de novo pathway; IMP from 5-formamido-1-(5-phospho-D-ribosyl)imidazole-4-carboxamide: step 1/1. This is Bifunctional purine biosynthesis protein PurH from Leptospira interrogans serogroup Icterohaemorrhagiae serovar Lai (strain 56601).